Here is a 119-residue protein sequence, read N- to C-terminus: Acidic phospholipase A2 CM-II (119 aa).

Tyr-25, Gly-27, and Gly-29 together coordinate Ca(2+). His-45 is an active-site residue. Asp-46 lines the Ca(2+) pocket. Asp-87 is an active-site residue.

This sequence belongs to the phospholipase A2 family. Group II subfamily. D49 sub-subfamily. The cofactor is Ca(2+). Contains 6 disulfide bonds. As to expression, expressed by the venom gland.

The protein localises to the secreted. The enzyme catalyses a 1,2-diacyl-sn-glycero-3-phosphocholine + H2O = a 1-acyl-sn-glycero-3-phosphocholine + a fatty acid + H(+). Its function is as follows. PLA2 catalyzes the calcium-dependent hydrolysis of the 2-acyl groups in 3-sn-phosphoglycerides. This is Acidic phospholipase A2 CM-II from Bitis nasicornis (Rhinoceros adder).